The sequence spans 148 residues: Endoribonuclease YbeY (148 aa).

Positions 112, 116, and 122 each coordinate Zn(2+).

The protein belongs to the endoribonuclease YbeY family. Zn(2+) serves as cofactor.

Its subcellular location is the cytoplasm. Its function is as follows. Single strand-specific metallo-endoribonuclease involved in late-stage 70S ribosome quality control and in maturation of the 3' terminus of the 16S rRNA. The polypeptide is Endoribonuclease YbeY (Albidiferax ferrireducens (strain ATCC BAA-621 / DSM 15236 / T118) (Rhodoferax ferrireducens)).